Consider the following 607-residue polypeptide: WD repeat-containing protein 1 (607 aa).

13 WD repeats span residues 4–45, 48–87, 93–135, 138–176, 180–218, 224–263, 270–306, 311–351, 358–408, 432–474, 480–518, 523–561, and 566–604; these read ELKK…IRNI, PAIA…IWDT, LLKY…LWDT, SVGE…FFEG, KFKF…LYDG, VGNL…IWDV, TTFH…YLDK, RPLR…YWDA, TFTG…KMDV, LKDK…LYSI, KDEG…VFNV, SEQN…VWTL, and ARIK…QWTV.

This sequence belongs to the WD repeat AIP1 family.

It localises to the cell membrane. The protein localises to the cytoplasm. Its subcellular location is the cytoskeleton. The protein resides in the nucleus. In terms of biological role, induces disassembly of actin filaments in conjunction with ADF/cofilin family proteins. Doesn't sever actin filaments alone, but caps the barbed ends of filaments severed by cofilin, which blocks annealing and depolymerization and allows more extensive severing by cofilin. In Xenopus tropicalis (Western clawed frog), this protein is WD repeat-containing protein 1.